A 360-amino-acid chain; its full sequence is 3-dehydroquinate synthase (360 aa).

NAD(+) is bound by residues 69–74, 103–107, 127–128, Lys-140, Lys-149, and 167–170; these read DGEAYK, GVIGD, TT, and CLQT. Residues Glu-182, His-245, and His-262 each coordinate Zn(2+).

It belongs to the sugar phosphate cyclases superfamily. Dehydroquinate synthase family. Co(2+) serves as cofactor. It depends on Zn(2+) as a cofactor. The cofactor is NAD(+).

The protein localises to the cytoplasm. It carries out the reaction 7-phospho-2-dehydro-3-deoxy-D-arabino-heptonate = 3-dehydroquinate + phosphate. The protein operates within metabolic intermediate biosynthesis; chorismate biosynthesis; chorismate from D-erythrose 4-phosphate and phosphoenolpyruvate: step 2/7. Its function is as follows. Catalyzes the conversion of 3-deoxy-D-arabino-heptulosonate 7-phosphate (DAHP) to dehydroquinate (DHQ). This chain is 3-dehydroquinate synthase, found in Aeromonas hydrophila subsp. hydrophila (strain ATCC 7966 / DSM 30187 / BCRC 13018 / CCUG 14551 / JCM 1027 / KCTC 2358 / NCIMB 9240 / NCTC 8049).